A 583-amino-acid polypeptide reads, in one-letter code: Steryl-sulfatase (583 aa).

The signal sequence occupies residues 1–21 (MPLRKMKIPFLLLFFLWEAES). The Lumenal portion of the chain corresponds to 22–184 (HAASRPNIIL…GSVFTTGFKR (163 aa)). Aspartate 35 and aspartate 36 together coordinate Ca(2+). Residue asparagine 47 is glycosylated (N-linked (GlcNAc...) asparagine). Residue cysteine 75 coordinates Ca(2+). Cysteine 75 acts as the Nucleophile in catalysis. Position 75 is a 3-oxoalanine (Cys) (cysteine 75). Residue histidine 136 is part of the active site. 2 disulfide bridges follow: cysteine 141–cysteine 148 and cysteine 170–cysteine 242. The chain crosses the membrane as a helical span at residues 185–208 (LVFLPLQIVGVTLLTLAALNCLGL). Residues 209–212 (LHVP) lie on the Cytoplasmic side of the membrane. The helical transmembrane segment at 213–234 (LGVFFSLLFLAALILTLFLGFL) threads the bilayer. The Lumenal segment spans residues 235 to 583 (HYFRPLNCFM…REKQDKRLSR (349 aa)). N-linked (GlcNAc...) asparagine glycosylation occurs at asparagine 259. The Ca(2+) site is built by aspartate 342 and glutamine 343. Intrachain disulfides connect cysteine 446–cysteine 489, cysteine 481–cysteine 487, cysteine 562–cysteine 570, and cysteine 563–cysteine 572.

The protein belongs to the sulfatase family. Homodimer. The cofactor is Ca(2+). In terms of processing, the conversion to 3-oxoalanine (also known as C-formylglycine, FGly), of a serine or cysteine residue in prokaryotes and of a cysteine residue in eukaryotes, is critical for catalytic activity.

Its subcellular location is the cytoplasmic vesicle. It localises to the secretory vesicle. The protein resides in the microneme membrane. The protein localises to the endoplasmic reticulum membrane. The catalysed reaction is dehydroepiandrosterone 3-sulfate + H2O = 3beta-hydroxyandrost-5-en-17-one + sulfate + H(+). The enzyme catalyses estrone 3-sulfate + H2O = estrone + sulfate + H(+). Its function is as follows. Catalyzes the conversion of sulfated steroid precursors, such as dehydroepiandrosterone sulfate (DHEA-S) and estrone sulfate to the free steroid. This chain is Steryl-sulfatase (STS), found in Homo sapiens (Human).